Here is a 390-residue protein sequence, read N- to C-terminus: Ketoisovalerate reductase BEA2 (390 aa).

Residue 70 to 75 (GPGNIG) coordinates NADP(+). K285 functions as the Proton donor in the catalytic mechanism. Substrate-binding residues include N289 and N293.

Belongs to the ketopantoate reductase family.

It catalyses the reaction (R)-2-hydroxy-3-methylbutanoate + NADP(+) = 3-methyl-2-oxobutanoate + NADPH + H(+). With respect to regulation, the reductase activity is increased by Mg(2+) (195%), Ca(2+) (169%) and slightly increased by K(+) (123%). The reduction activity is inhibited by Fe(2+) and Co(2+), and almost totally inhibited by Cu(2+), Mn(2+), Zn(2+) and Fe(3+) (from 3% to 9% residual activity respectively). The chelating agent EDTA had little effect, suggesting Mg(2+) and Ca(2+) are not determining factors, though they could promote the reductase enzyme activity. Its function is as follows. Ketoisovalerate reductase; part of the gene cluster that mediates the biosynthesis of beauvericin (BEA), a non-ribosomal cyclic hexadepsipeptide that shows antibiotic, antifungal, insecticidal, and cancer cell antiproliferative and antihaptotactic activity. Ketoisovalerate reductase BEA2 catalyzes the NADPH-specific reduction of ketoisovaleric acid to hydroxyisovalerate, a precursor for beauvericin biosynthesis. The nonribosomal cyclodepsipeptide synthetase BEA1 then catalyzes the formation of beauvericin via condensation and cyclization of 3 dipeptidol monomers, each composed of one unit of hydroxyisovalerate and one unit of N-methyl-phenylalanine. The polypeptide is Ketoisovalerate reductase BEA2 (Gibberella intermedia (Bulb rot disease fungus)).